We begin with the raw amino-acid sequence, 436 residues long: 3-ketoacyl-CoA thiolase (436 aa).

The active-site Acyl-thioester intermediate is Cys99. Residues His392 and Cys422 each act as proton acceptor in the active site.

The protein belongs to the thiolase-like superfamily. Thiolase family. In terms of assembly, heterotetramer of two alpha chains (FadJ) and two beta chains (FadI).

It is found in the cytoplasm. The catalysed reaction is an acyl-CoA + acetyl-CoA = a 3-oxoacyl-CoA + CoA. It participates in lipid metabolism; fatty acid beta-oxidation. Functionally, catalyzes the final step of fatty acid oxidation in which acetyl-CoA is released and the CoA ester of a fatty acid two carbons shorter is formed. In Shewanella woodyi (strain ATCC 51908 / MS32), this protein is 3-ketoacyl-CoA thiolase.